A 457-amino-acid polypeptide reads, in one-letter code: MSAGKIIQIIGAVIDVEFPQNAVPKVYDALKVESGLTLEVQQQLGGGVVRCIALGSSDGLKRGLKVENTGNPISVPVGTKTLGRIMNVLGEPIDEKGEIGAEETWAIHRAAPSYEEQSNSTELLETGIKVIDLICPFAKGGKVGLFGGAGVGKTVNMMELIRNIAIEHSGYSVFAGVGERTREGNDFYHEMTESNVLDKVSLVYGQMNEPPGNRLRVALTGLTMAEKFRDEGRDVLFFVDNIYRYTLAGTEVSALLGRMPSAVGYQPTLAEEMGVLQERITSTKTGSITSVQAVYVPADDLTDPSPATTFAHLDSTVVLSRNIASLGIYPAVDPLDSTSRQLDPLVVGQEHYDVARGVQGILQRYKELKDIIAILGMDELSEDDKLVVARARKIERFLSQPFFVAEVFTGSPGKYVSLKDTIRGFKGILDGEYDHIPEQAFYMVGSIEEVLEKAKKM.

147–154 (GGAGVGKT) is an ATP binding site.

This sequence belongs to the ATPase alpha/beta chains family. As to quaternary structure, F-type ATPases have 2 components, CF(1) - the catalytic core - and CF(0) - the membrane proton channel. CF(1) has five subunits: alpha(3), beta(3), gamma(1), delta(1), epsilon(1). CF(0) has three main subunits: a(1), b(2) and c(9-12). The alpha and beta chains form an alternating ring which encloses part of the gamma chain. CF(1) is attached to CF(0) by a central stalk formed by the gamma and epsilon chains, while a peripheral stalk is formed by the delta and b chains.

It is found in the cell inner membrane. The catalysed reaction is ATP + H2O + 4 H(+)(in) = ADP + phosphate + 5 H(+)(out). Functionally, produces ATP from ADP in the presence of a proton gradient across the membrane. The catalytic sites are hosted primarily by the beta subunits. The polypeptide is ATP synthase subunit beta (Histophilus somni (strain 129Pt) (Haemophilus somnus)).